Reading from the N-terminus, the 783-residue chain is Probable galactinol--sucrose galactosyltransferase 5 (783 aa).

Phosphoserine is present on residues serine 9 and serine 11.

Belongs to the glycosyl hydrolases 36 family.

The catalysed reaction is alpha-D-galactosyl-(1-&gt;3)-1D-myo-inositol + sucrose = raffinose + myo-inositol. Functionally, transglycosidase operating by a ping-pong reaction mechanism. Involved in the synthesis of raffinose, a major soluble carbohydrate in seeds, roots and tubers. In Arabidopsis thaliana (Mouse-ear cress), this protein is Probable galactinol--sucrose galactosyltransferase 5 (RFS5).